Reading from the N-terminus, the 310-residue chain is Oxygen-dependent coproporphyrinogen-III oxidase (310 aa).

Ser92 is a binding site for substrate. Residues His96 and His106 each contribute to the a divalent metal cation site. The active-site Proton donor is His106. A substrate-binding site is contributed by 108–110 (NVR). 2 residues coordinate a divalent metal cation: His145 and His175. The segment at 240 to 275 (YVEFNLIWDRGTLFGLQSGGRTESILMSMPPLARWE) is important for dimerization. Position 258-260 (258-260 (GGR)) interacts with substrate.

Belongs to the aerobic coproporphyrinogen-III oxidase family. As to quaternary structure, homodimer. A divalent metal cation is required as a cofactor.

The protein localises to the cytoplasm. It carries out the reaction coproporphyrinogen III + O2 + 2 H(+) = protoporphyrinogen IX + 2 CO2 + 2 H2O. Its pathway is porphyrin-containing compound metabolism; protoporphyrin-IX biosynthesis; protoporphyrinogen-IX from coproporphyrinogen-III (O2 route): step 1/1. Functionally, involved in the heme biosynthesis. Catalyzes the aerobic oxidative decarboxylation of propionate groups of rings A and B of coproporphyrinogen-III to yield the vinyl groups in protoporphyrinogen-IX. The protein is Oxygen-dependent coproporphyrinogen-III oxidase of Pectobacterium atrosepticum (strain SCRI 1043 / ATCC BAA-672) (Erwinia carotovora subsp. atroseptica).